The chain runs to 416 residues: Gamma-glutamyl phosphate reductase (416 aa).

It belongs to the gamma-glutamyl phosphate reductase family.

The protein resides in the cytoplasm. It catalyses the reaction L-glutamate 5-semialdehyde + phosphate + NADP(+) = L-glutamyl 5-phosphate + NADPH + H(+). It participates in amino-acid biosynthesis; L-proline biosynthesis; L-glutamate 5-semialdehyde from L-glutamate: step 2/2. In terms of biological role, catalyzes the NADPH-dependent reduction of L-glutamate 5-phosphate into L-glutamate 5-semialdehyde and phosphate. The product spontaneously undergoes cyclization to form 1-pyrroline-5-carboxylate. The chain is Gamma-glutamyl phosphate reductase from Streptococcus pyogenes serotype M4 (strain MGAS10750).